Consider the following 322-residue polypeptide: Peptidase 1 (322 aa).

The first 18 residues, 1-18 (MKFVLAIASLLVLSVVYA), serve as a signal peptide directing secretion. Residues 19–99 (YPSEIRTFEE…LKKEFDLDAG (81 aa)) constitute a propeptide that is removed on maturation. Cys-131 and Cys-171 are disulfide-bonded. Cys-134 is a catalytic residue. Asn-152 carries an N-linked (GlcNAc...) asparagine glycan. Active-site residues include His-270 and Asn-290.

Belongs to the peptidase C1 family. Expressed in the gut.

It localises to the secreted. It catalyses the reaction Broad endopeptidase specificity.. In terms of biological role, probable thiol protease. This Psoroptes ovis (Sheep scab mite) protein is Peptidase 1.